The primary structure comprises 55 residues: UPF0291 protein CA_C2726 (55 aa).

This sequence belongs to the UPF0291 family.

The protein localises to the cytoplasm. This chain is UPF0291 protein CA_C2726, found in Clostridium acetobutylicum (strain ATCC 824 / DSM 792 / JCM 1419 / IAM 19013 / LMG 5710 / NBRC 13948 / NRRL B-527 / VKM B-1787 / 2291 / W).